We begin with the raw amino-acid sequence, 283 residues long: 4-diphosphocytidyl-2-C-methyl-D-erythritol kinase (283 aa).

The active site involves lysine 13. ATP is bound at residue 96–106 (PMGGGIGGGSS). Residue aspartate 138 is part of the active site.

This sequence belongs to the GHMP kinase family. IspE subfamily.

It catalyses the reaction 4-CDP-2-C-methyl-D-erythritol + ATP = 4-CDP-2-C-methyl-D-erythritol 2-phosphate + ADP + H(+). It functions in the pathway isoprenoid biosynthesis; isopentenyl diphosphate biosynthesis via DXP pathway; isopentenyl diphosphate from 1-deoxy-D-xylulose 5-phosphate: step 3/6. In terms of biological role, catalyzes the phosphorylation of the position 2 hydroxy group of 4-diphosphocytidyl-2C-methyl-D-erythritol. This Pseudomonas fluorescens (strain SBW25) protein is 4-diphosphocytidyl-2-C-methyl-D-erythritol kinase.